The following is a 179-amino-acid chain: Transcription factor BOA15 (179 aa).

It localises to the nucleus. In terms of biological role, transcription factor that probably coregulates the gene clusters that mediates the biosynthesis of botcinin acid and its botcinin derivatives, acetate-derived polyketides that contribute to virulence when combined with the sesquiterpene botrydial. Botcinin acid and its derivatives have been shown to induce chlorosis and necrosis during host plant infection, but also have antifungal activities. The protein is Transcription factor BOA15 of Botryotinia fuckeliana (strain B05.10) (Noble rot fungus).